A 115-amino-acid polypeptide reads, in one-letter code: uncharacterized protein (115 aa).

The next 2 membrane-spanning stretches (helical) occupy residues Phe15–Phe35 and Phe52–Ile72.

It localises to the membrane. This is an uncharacterized protein from Saccharomyces cerevisiae (strain ATCC 204508 / S288c) (Baker's yeast).